The following is a 72-amino-acid chain: Translation initiation factor IF-1 (72 aa).

Positions 1-72 (MAKEDCIEMQ…SKARIIFRAR (72 aa)) constitute an S1-like domain.

The protein belongs to the IF-1 family. As to quaternary structure, component of the 30S ribosomal translation pre-initiation complex which assembles on the 30S ribosome in the order IF-2 and IF-3, IF-1 and N-formylmethionyl-tRNA(fMet); mRNA recruitment can occur at any time during PIC assembly.

The protein resides in the cytoplasm. Its function is as follows. One of the essential components for the initiation of protein synthesis. Stabilizes the binding of IF-2 and IF-3 on the 30S subunit to which N-formylmethionyl-tRNA(fMet) subsequently binds. Helps modulate mRNA selection, yielding the 30S pre-initiation complex (PIC). Upon addition of the 50S ribosomal subunit IF-1, IF-2 and IF-3 are released leaving the mature 70S translation initiation complex. The protein is Translation initiation factor IF-1 of Actinobacillus pleuropneumoniae serotype 5b (strain L20).